We begin with the raw amino-acid sequence, 246 residues long: 5-oxoprolinase subunit A (246 aa).

The protein belongs to the LamB/PxpA family. In terms of assembly, forms a complex composed of PxpA, PxpB and PxpC.

It catalyses the reaction 5-oxo-L-proline + ATP + 2 H2O = L-glutamate + ADP + phosphate + H(+). In terms of biological role, catalyzes the cleavage of 5-oxoproline to form L-glutamate coupled to the hydrolysis of ATP to ADP and inorganic phosphate. This Cupriavidus metallidurans (strain ATCC 43123 / DSM 2839 / NBRC 102507 / CH34) (Ralstonia metallidurans) protein is 5-oxoprolinase subunit A.